The following is a 23-amino-acid chain: Lycosin-II (23 aa).

Leu-21 bears the Leucine amide mark.

In terms of tissue distribution, expressed by the venom gland.

It localises to the secreted. The protein resides in the target cell membrane. In terms of biological role, has strong antibacterial activity and biofilm inhibition effects against Gram-positive and -negative bacteria including E.coli, S.epidermidis, and A.baumannii and oxacillin-resistant S.aureus and meropenem-resistant P.aeruginosa. Is not cytotoxic against human foreskin fibroblast Hs27 or hemolytic against mammalian red blood cells. Its mechanism of action involves binding to lipoteichoic acid and lipopolysaccharide of Gram-positive and Gram-negative bacterial membranes, respectively, to destroy the bacterial membrane. In addition, it shows anti-inflammatory effects by inhibiting the expression of pro-inflammatory cytokines that are increased during bacterial infection in Hs27 cells. The polypeptide is Lycosin-II (Lycosa singoriensis (Wolf spider)).